Reading from the N-terminus, the 114-residue chain is MKAINRLRKNEDFRKVYKKRKSMANKLLIIYILENGYNFNRVGFTVSKKVGKSVIRSRVKRLLNESYRLNNEKVKQGYDIIFVARNTCVDASYKEIESAILHLLKKMNLINSAV.

Belongs to the RnpA family. As to quaternary structure, consists of a catalytic RNA component (M1 or rnpB) and a protein subunit.

It carries out the reaction Endonucleolytic cleavage of RNA, removing 5'-extranucleotides from tRNA precursor.. Its function is as follows. RNaseP catalyzes the removal of the 5'-leader sequence from pre-tRNA to produce the mature 5'-terminus. It can also cleave other RNA substrates such as 4.5S RNA. The protein component plays an auxiliary but essential role in vivo by binding to the 5'-leader sequence and broadening the substrate specificity of the ribozyme. This chain is Ribonuclease P protein component, found in Alkaliphilus oremlandii (strain OhILAs) (Clostridium oremlandii (strain OhILAs)).